Reading from the N-terminus, the 696-residue chain is Glycosyltransferase GlyA (696 aa).

The tract at residues 1–301 (MLVDDKITVI…NQLSRQEESE (301 aa)) is GT2 domain. Residues 302-556 (KKAIVLAANY…TELGQNHHLH (255 aa)) form a GT8 domain region. Residues 308 to 313 (AANYGY) and 399 to 400 (DC) each bind UDP. Residues aspartate 399, aspartate 401, and histidine 518 each coordinate Mn(2+). A UDP-binding site is contributed by 518-524 (HYLSHRK).

This sequence in the N-terminal section; belongs to the glycosyltransferase 2 family. The protein in the central section; belongs to the glycosyltransferase 8 family.

The protein operates within protein modification; protein glycosylation. Involved in the polymorphic O-glycosylation of the serine-rich repeat protein PsrP. Catalyzes the fourth step in glycosylation of PsrP in this bacteria. Can transfer the sugar from UDP-galactose to the terminal sugar moiety of PsrP-GlcNAc-Glc-Gal or of PsrP-GlcNAc-Glc-Glc (using truncated substrates with the PsrP SSR1 domain). Has hydrolytic activity against UDP-galactose and to a lesser extent against UDP-glucose. In Streptococcus pneumoniae serotype 4 (strain ATCC BAA-334 / TIGR4), this protein is Glycosyltransferase GlyA.